Here is an 807-residue protein sequence, read N- to C-terminus: Leucine--tRNA ligase (807 aa).

A 'HIGH' region motif is present at residues 40-51 (PYPSGTGLHVGH). The short motif at 576–580 (KMSKS) is the 'KMSKS' region element. An ATP-binding site is contributed by Lys-579.

The protein belongs to the class-I aminoacyl-tRNA synthetase family.

The protein localises to the cytoplasm. The enzyme catalyses tRNA(Leu) + L-leucine + ATP = L-leucyl-tRNA(Leu) + AMP + diphosphate. The sequence is that of Leucine--tRNA ligase from Pelodictyon phaeoclathratiforme (strain DSM 5477 / BU-1).